Consider the following 205-residue polypeptide: GTP-binding protein rho3 (205 aa).

GTP is bound at residue 20–27 (GDGAAGKT). The Effector region motif lies at 42–50 (YEPTIFENY). Residues 67–71 (DTAGQ) and 125–128 (LKCD) contribute to the GTP site. Position 202 is a cysteine methyl ester (cysteine 202). Residue cysteine 202 is the site of S-geranylgeranyl cysteine attachment. Positions 203-205 (IIA) are cleaved as a propeptide — removed in mature form.

The protein belongs to the small GTPase superfamily. Rho family. In terms of assembly, interacts with for3. In terms of processing, palmitoylated by the erf2-erf4 complex.

The protein resides in the cell membrane. Functionally, involved in controlling cell shape and septation. Regulates cell separation by modulating the function of the exocyst complex. Involved in post-Golgi vesicle transport. Involved in driving sexual development in a palmitoylation-dependent manner. The chain is GTP-binding protein rho3 (rho3) from Schizosaccharomyces pombe (strain 972 / ATCC 24843) (Fission yeast).